Reading from the N-terminus, the 111-residue chain is C-X-C motif chemokine 14 (111 aa).

A signal peptide spans 1 to 34; that stretch reads MSLLPRRAPPVSMRLLAAALLLLLLALYTARVDG. 2 disulfide bridges follow: C37/C63 and C39/C84. Residues 67–81 carry the D-box motif; that stretch reads MVIITTKSVSRYRGQ.

It belongs to the intercrine alpha (chemokine CxC) family. In terms of processing, ubiquitinated, followed by degradation by the proteasome. In terms of tissue distribution, expressed in heart, brain, placenta, lung, liver, skeletal muscle, kidney and pancreas. Highly expressed in normal tissue without inflammatory stimuli and infrequently expressed in cancer cell lines. Weakly expressed in monocyte-derived dendritic cells. Not detected in lung or unstimulated peripheral blood lymphocytes.

The protein resides in the secreted. Functionally, potent chemoattractant for neutrophils, and weaker for dendritic cells. Not chemotactic for T-cells, B-cells, monocytes, natural killer cells or granulocytes. Does not inhibit proliferation of myeloid progenitors in colony formation assays. The chain is C-X-C motif chemokine 14 (CXCL14) from Homo sapiens (Human).